A 284-amino-acid polypeptide reads, in one-letter code: MEMO1 family protein MmarC5_0191 (284 aa).

This sequence belongs to the MEMO1 family.

This chain is MEMO1 family protein MmarC5_0191, found in Methanococcus maripaludis (strain C5 / ATCC BAA-1333).